The sequence spans 397 residues: Neuroplastin (397 aa).

Positions 1–28 (MSGSSLPGALALSLLLVSGSLLPGPGAA) are cleaved as a signal peptide. Ig-like domains follow at residues 29-134 (QNAG…PSIT), 148-234 (PRIV…IEVK), and 237-327 (PDIT…ASVS). Topologically, residues 29–338 (QNAGFVKSPM…VLRVRSHLAP (310 aa)) are extracellular. A disulfide bridge links cysteine 52 with cysteine 116. The narpin; mediates binding with FGFR1 and has antidepressant-like activity stretch occupies residues 149–161 (RIVTSEEVIIRES). Cysteine 169 and cysteine 217 are oxidised to a cystine. N-linked (GlcNAc...) asparagine glycans are attached at residues asparagine 170, asparagine 196, asparagine 228, asparagine 283, asparagine 295, and asparagine 316. Cysteine 258 and cysteine 315 are oxidised to a cystine. The helical transmembrane segment at 339–359 (LWPFLGILAEIIILVVIIVVY) threads the bilayer. The Cytoplasmic portion of the chain corresponds to 360–397 (EKRKRPDEVPDDDEPAGPMKTNSTNNHKDKNLRQRNTN). Positions 364–397 (RPDEVPDDDEPAGPMKTNSTNNHKDKNLRQRNTN) are disordered.

Interacts with ATP2B1; this interaction stabilizes ATP2B1 and increases ATPase activity; this interaction controls T cell calcium homeostasis following T cell activation. Interacts with XKR8; promoting its localization at the cell membrane. Post-translationally, N-glycosylated. As to expression, isoform 1 and isoform 2 are widely expressed with variable levels in brain. Isoform 1 is expressed in cerebellum and midbrain. Isoform 1 and isoform 2 are expressed in cerebral cortex, hippocampus and striatum. Isoform 2 is more abundant in the cerebral cortex than isoform 1.

Its subcellular location is the cell membrane. It is found in the postsynaptic density. Functionally, probable homophilic and heterophilic cell adhesion molecule involved in long term potentiation at hippocampal excitatory synapses through activation of p38MAPK. May also regulate neurite outgrowth by activating the FGFR1 signaling pathway. May play a role in synaptic plasticity. Also acts as a chaperone for ATP2B1; stabilizes ATP2B1 and increases its ATPase activity. Promotes localization of XKR8 at the cell membrane. This is Neuroplastin (Nptn) from Mus musculus (Mouse).